The primary structure comprises 177 residues: Translation initiation factor IF-3 (177 aa).

The protein belongs to the IF-3 family. As to quaternary structure, monomer.

Its subcellular location is the cytoplasm. In terms of biological role, IF-3 binds to the 30S ribosomal subunit and shifts the equilibrium between 70S ribosomes and their 50S and 30S subunits in favor of the free subunits, thus enhancing the availability of 30S subunits on which protein synthesis initiation begins. The sequence is that of Translation initiation factor IF-3 from Nostoc sp. (strain PCC 7120 / SAG 25.82 / UTEX 2576).